A 394-amino-acid polypeptide reads, in one-letter code: Elongation factor Tu (394 aa).

Positions 10–204 constitute a tr-type G domain; that stretch reads KPHINVGTIG…ALDNYIPEPK (195 aa). The tract at residues 19–26 is G1; that stretch reads GHVDHGKT. 19–26 is a GTP binding site; it reads GHVDHGKT. T26 provides a ligand contact to Mg(2+). The tract at residues 60–64 is G2; the sequence is GITIN. Residues 81-84 form a G3 region; that stretch reads DCPG. GTP contacts are provided by residues 81-85 and 136-139; these read DCPGH and NKCD. The tract at residues 136–139 is G4; that stretch reads NKCD. Residues 174-176 are G5; that stretch reads SAL.

This sequence belongs to the TRAFAC class translation factor GTPase superfamily. Classic translation factor GTPase family. EF-Tu/EF-1A subfamily. As to quaternary structure, monomer.

Its subcellular location is the cytoplasm. The catalysed reaction is GTP + H2O = GDP + phosphate + H(+). GTP hydrolase that promotes the GTP-dependent binding of aminoacyl-tRNA to the A-site of ribosomes during protein biosynthesis. The sequence is that of Elongation factor Tu from Blochmanniella pennsylvanica (strain BPEN).